Consider the following 238-residue polypeptide: MGNSALKAHLETSQKTGVFQLTGKGLTEFPEDLQKLTANLRTVDLSNNKIEELPAFIGSFQHLKSFTISCNKLTSLPNDIGKLKKLETLILNGNQLKQLPSSIGQLKSLRTLSLSGNQFKEFPSGLGTLRQLDVLDLSKNQIRVVPAEVAELQAIEINLNQNQISSVTQEVSRTPRLKVLRLEENCLELSSIPLSILTDSQVSLLSVEGNLFEVKKMRDLEGYDKYMERFTATKKKFA.

LRR repeat units lie at residues 10–36 (LETS…LQKL), 37–62 (TANL…SFQH), 64–82 (KSFT…DIGK), 83–106 (LKKL…IGQL), 108–128 (SLRT…GLGT), 129–152 (LRQL…VAEL), 154–173 (AIEI…EVSR), and 174–199 (TPRL…ILTD).

This Danio rerio (Zebrafish) protein is Leucine-rich repeat-containing protein 57 (lrrc57).